A 698-amino-acid chain; its full sequence is Polyribonucleotide nucleotidyltransferase (698 aa).

2 residues coordinate Mg(2+): aspartate 485 and aspartate 491. The 60-residue stretch at 552 to 611 (PRIHTIKINTDKIRDVIGKGGAVIRSLCEETGTTIEIEDDGTVKIAATSGEQADDAINRI) folds into the KH domain. The 69-residue stretch at 621-689 (GTIYTGKVVR…RQGRVRLSIK (69 aa)) folds into the S1 motif domain.

The protein belongs to the polyribonucleotide nucleotidyltransferase family. In terms of assembly, component of the RNA degradosome, which is a multiprotein complex involved in RNA processing and mRNA degradation. Mg(2+) serves as cofactor.

Its subcellular location is the cytoplasm. The catalysed reaction is RNA(n+1) + phosphate = RNA(n) + a ribonucleoside 5'-diphosphate. Its function is as follows. Involved in mRNA degradation. Catalyzes the phosphorolysis of single-stranded polyribonucleotides processively in the 3'- to 5'-direction. The protein is Polyribonucleotide nucleotidyltransferase of Psychromonas ingrahamii (strain DSM 17664 / CCUG 51855 / 37).